The sequence spans 270 residues: tRNA pseudouridine synthase A (270 aa).

Catalysis depends on aspartate 60, which acts as the Nucleophile. Tyrosine 118 provides a ligand contact to substrate.

This sequence belongs to the tRNA pseudouridine synthase TruA family. Homodimer.

It carries out the reaction uridine(38/39/40) in tRNA = pseudouridine(38/39/40) in tRNA. In terms of biological role, formation of pseudouridine at positions 38, 39 and 40 in the anticodon stem and loop of transfer RNAs. This Salmonella arizonae (strain ATCC BAA-731 / CDC346-86 / RSK2980) protein is tRNA pseudouridine synthase A.